Reading from the N-terminus, the 355-residue chain is 3-dehydroquinate synthase (355 aa).

NAD(+) contacts are provided by residues 71–76 (EGEERK), 105–109 (GVVGD), 129–130 (TS), Lys-142, and Lys-151. Zn(2+) contacts are provided by Glu-184, His-246, and His-263.

It belongs to the sugar phosphate cyclases superfamily. Dehydroquinate synthase family. Co(2+) is required as a cofactor. The cofactor is Zn(2+). Requires NAD(+) as cofactor.

The protein resides in the cytoplasm. The catalysed reaction is 7-phospho-2-dehydro-3-deoxy-D-arabino-heptonate = 3-dehydroquinate + phosphate. The protein operates within metabolic intermediate biosynthesis; chorismate biosynthesis; chorismate from D-erythrose 4-phosphate and phosphoenolpyruvate: step 2/7. Its function is as follows. Catalyzes the conversion of 3-deoxy-D-arabino-heptulosonate 7-phosphate (DAHP) to dehydroquinate (DHQ). This Streptococcus pneumoniae (strain Hungary19A-6) protein is 3-dehydroquinate synthase.